We begin with the raw amino-acid sequence, 68 residues long: Protein SlyX homolog (68 aa).

The protein belongs to the SlyX family.

This chain is Protein SlyX homolog, found in Pseudomonas syringae pv. syringae (strain B728a).